Reading from the N-terminus, the 225-residue chain is Cyanamide hydratase DDI2 (225 aa).

Residues V52–V162 enclose the HD domain.

This sequence belongs to the cyanamide dehydrase family. As to quaternary structure, homohexamer. Zn(2+) is required as a cofactor.

The enzyme catalyses urea = cyanamide + H2O. Cyanamide hydratase involved in the detoxification and/or utilization of cyanamide, a toxic nitrile compound distributed widely in the environment. The protein is Cyanamide hydratase DDI2 of Saccharomyces cerevisiae (strain ATCC 204508 / S288c) (Baker's yeast).